Reading from the N-terminus, the 89-residue chain is MIRQQKRLTIILLLLGVDKRDYSSCNVKTLLYSIRDYAKSVNDHEILTESNRLLSHCISDSNGAFFKSSKYVPLKYLRKRRIARKIPND.

This is an uncharacterized protein from Shigella flexneri.